A 427-amino-acid chain; its full sequence is Trigger factor (427 aa).

Residues 160–240 enclose the PPIase FKBP-type domain; that stretch reads TDTVIGDVEK…VKEVKRLELP (81 aa).

Belongs to the FKBP-type PPIase family. Tig subfamily.

The protein resides in the cytoplasm. It carries out the reaction [protein]-peptidylproline (omega=180) = [protein]-peptidylproline (omega=0). Its function is as follows. Involved in protein export. Acts as a chaperone by maintaining the newly synthesized protein in an open conformation. Functions as a peptidyl-prolyl cis-trans isomerase. This is Trigger factor from Chlorobium phaeobacteroides (strain DSM 266 / SMG 266 / 2430).